A 278-amino-acid chain; its full sequence is Large ribosomal subunit protein uL2 (278 aa).

Disordered stretches follow at residues Leu33–Gly57 and Val224–Arg278. Positions Ala45–Gly57 are enriched in basic residues. Over residues Pro253 to Ile268 the composition is skewed to basic and acidic residues. Residues Val269–Arg278 are compositionally biased toward basic residues.

It belongs to the universal ribosomal protein uL2 family. Part of the 50S ribosomal subunit. Forms a bridge to the 30S subunit in the 70S ribosome.

Functionally, one of the primary rRNA binding proteins. Required for association of the 30S and 50S subunits to form the 70S ribosome, for tRNA binding and peptide bond formation. It has been suggested to have peptidyltransferase activity; this is somewhat controversial. Makes several contacts with the 16S rRNA in the 70S ribosome. This Mycobacteroides abscessus (strain ATCC 19977 / DSM 44196 / CCUG 20993 / CIP 104536 / JCM 13569 / NCTC 13031 / TMC 1543 / L948) (Mycobacterium abscessus) protein is Large ribosomal subunit protein uL2.